We begin with the raw amino-acid sequence, 1103 residues long: MNHQQQQQQQQKAGEQQLSEPEDMEMEAGDTDDPPRITQNPVINGNVTLSDGHSNAEEDMEDDTSWRSEATFQFTVERFSRLSESVLSPPCFVRNLPWKIMVMPRFYPDRPHQKSVGFFLQCNAESDSTSWSCHAQAVLKIINYRDDDKSFSRRISHLFFHEENDWGFSNFMAWSEVTDPEKGFIDDDKVTFEVFVQADAPHGVAWDSKKHTGYVGLKNQGATCYMNSLLQTLFFTNQLRKAVYMMPTEGDDSSKSVPLALQRVFYELQHSDKPVGTKKLTKSFGWETLDSFMQHDVQELCRVLLDNVENKMKGTCVEGTIPKLFRGKMVSYIQCKDVDYRSDRREDYYDIQLSIKGKKNIFESFVDYVAVEQLDGDNKYDAGEHGLQEAEKGVKFLTLPPVLHLQLMRFMYDPQTDQNIKINDRFEFPEQLPLDEFLQKTDPKDPANYILHAVLVHSGDNHGGHYVVYLNPKGDGKWCKFDDDVVSRCTKEEAIEHNYGGHDDDLSVRHCTNAYMLVYIRESKLSEVLQAVTDHDIPQQLVERLQEEKRIEAQKRKERQEAHLYMQVQIVAEDQFCGHQGNDMYDEEKVRYTVFKVLKNSSLAEFVQSLSQTMGFPQDQIRLWPMQARSNGTKRPAMLDNEADGNKTMIELSDNENPWTIFLETVDPELAASGATLPKFDKDHDVMLFLKMYDPKTRSLNYCGHIYTPISCKIRDLLPVMCDRAGFIQDTSLILYEEVKPNLTERIQDYDVSLDKALDELMDGDIIVFQKDDPENDNSELPTAKEYFRDLYHRVDVIFCDKTIPNDPGFVVTLSNRMNYFQVAKTVAQRLNTDPMLLQFFKSQGYRDGPGNPLRHNYEGTLRDLLQFFKPRQPKKLYYQQLKMKITDFENRRSFKCIWLNSQFREEEITLYPDKHGCVRDLLEECKKAVELGDKASGRLRLLEIVSYKIIGVHQEDELLECLSPATSRTFRIEEIPLDQVDIDKENEMLITVAHFHKEVFGTFGIPFLLRIHQGEHFREVMKRIQSLLDIQEKEFEKFKFAIVMMGRHQYINEDEYEVNLKDFEPQPGNMSHPRPWLGLDHFNKAPKRSRYTYLEKAIKIHN.

Positions 1–11 are enriched in low complexity; the sequence is MNHQQQQQQQQ. Disordered regions lie at residues 1 to 41 and 46 to 65; these read MNHQ…TQNP and NVTL…DDTS. The segment at 1-209 is interaction with TSPYL5; the sequence is MNHQQQQQQQ…APHGVAWDSK (209 aa). The residue at position 19 (serine 19) is a Phosphoserine. The span at 20–32 shows a compositional bias: acidic residues; sequence EPEDMEMEAGDTD. Phosphoserine occurs at positions 50 and 54. An interaction with p53/TP53 and MDM2 region spans residues 54 to 209; sequence SNAEEDMEDD…APHGVAWDSK (156 aa). In terms of domain architecture, MATH spans 69-196; the sequence is EATFQFTVER…DDKVTFEVFV (128 aa). Residues 71 to 206 form a necessary for nuclear localization region; sequence TFQFTVERFS…QADAPHGVAW (136 aa). The region spanning 215–522 is the USP domain; that stretch reads VGLKNQGATC…NAYMLVYIRE (308 aa). The active-site Nucleophile is the cysteine 224. Histidine 465 functions as the Proton acceptor in the catalytic mechanism. Lysine 870 carries the N6-acetyllysine; alternate modification. Lysine 870 participates in a covalent cross-link: Glycyl lysine isopeptide (Lys-Gly) (interchain with G-Cter in SUMO2); alternate. Lysine 870 is covalently cross-linked (Glycyl lysine isopeptide (Lys-Gly) (interchain with G-Cter in ubiquitin); alternate). Lysine 883 is covalently cross-linked (Glycyl lysine isopeptide (Lys-Gly) (interchain with G-Cter in SUMO2)). Serine 964 bears the Phosphoserine mark. 2 positions are modified to N6-acetyllysine: lysine 1085 and lysine 1097.

The protein belongs to the peptidase C19 family. Monomer. Homodimer. Part of a complex with DAXX, MDM2, RASSF1 and USP7. Part of a complex with DAXX, MDM2 and USP7. Interacts with MDM2; the interaction is independent of p53/TP53. Interacts with DAXX; the interaction is direct and independent of MDM2 and p53/TP53. Component of a complex composed of KMT2E, OGT and USP7; the complex stabilizes KMT2E, preventing KMT2E ubiquitination and proteasomal-mediated degradation. Interacts (via MATH domain) with KMT2E. Interacts with OGT. Interacts with FOXO4; the interaction is enhanced in presence of hydrogen peroxide and occurs independently of p53/TP53. Interacts with p53/TP53; the interaction is enhanced in response to DNA damage; the interaction is impaired by TSPYL5. Interacts with PTEN; the interaction is direct. Interacts with ATXN1 and the strength of interaction is influenced by the length of the poly-Gln region in ATXN1. A weaker interaction seen with mutants having longer poly-Gln regions. Interacts with KIAA1530/UVSSA. Interacts with MEX3C and antagonizes its ability to degrade mRNA. Interacts with DNMT1 and UHRF1. Interacts with FOXP3. Interacts (via MATH domain) with RNF220. Associated component of the Polycomb group (PcG) multiprotein PRC1-like complex. Interacts with EPOP. Interacts with OTUD4 and USP9X; the interaction is direct. Interacts with CRY2. Interacts with REST. Interacts with ERCC6. Part of a complex consisting of USP7, MAGEL2 and TRIM27; directly interacts with MAGEL2; directly interacts with TRIM27. In terms of processing, polyneddylated. Post-translationally, not sumoylated. Polyubiquitinated. Ubiquitinated at Lys-870. As to expression, widely expressed. High expression is detected in brain, bone marrow, thymus and testis.

Its subcellular location is the nucleus. It is found in the cytoplasm. The protein resides in the PML body. It localises to the chromosome. It carries out the reaction Thiol-dependent hydrolysis of ester, thioester, amide, peptide and isopeptide bonds formed by the C-terminal Gly of ubiquitin (a 76-residue protein attached to proteins as an intracellular targeting signal).. In terms of biological role, hydrolase that deubiquitinates target proteins such as ARMC5, FOXO4, DEPTOR, KAT5, p53/TP53, MDM2, ERCC6, DNMT1, UHRF1, PTEN, KMT2E/MLL5 and DAXX. Together with DAXX, prevents MDM2 self-ubiquitination and enhances the E3 ligase activity of MDM2 towards p53/TP53, thereby promoting p53/TP53 ubiquitination and proteasomal degradation. Deubiquitinates p53/TP53, preventing degradation of p53/TP53, and enhances p53/TP53-dependent transcription regulation, cell growth repression and apoptosis. Deubiquitinates p53/TP53 and MDM2 and strongly stabilizes p53/TP53 even in the presence of excess MDM2, and also induces p53/TP53-dependent cell growth repression and apoptosis. Deubiquitination of FOXO4 in presence of hydrogen peroxide is not dependent on p53/TP53 and inhibits FOXO4-induced transcriptional activity. In association with DAXX, is involved in the deubiquitination and translocation of PTEN from the nucleus to the cytoplasm, both processes that are counteracted by PML. Deubiquitinates KMT2E preventing KMT2E proteasomal-mediated degradation. Involved in cell proliferation during early embryonic development. Involved in transcription-coupled nucleotide excision repair (TC-NER) in response to UV damage: recruited to DNA damage sites following interaction with KIAA1530/UVSSA and promotes deubiquitination of ERCC6, preventing UV-induced degradation of ERCC6. Involved in maintenance of DNA methylation via its interaction with UHRF1 and DNMT1: acts by mediating deubiquitination of UHRF1 and DNMT1, preventing their degradation and promoting DNA methylation by DNMT1. Deubiquitinates alkylation repair enzyme ALKBH3. OTUD4 recruits USP7 and USP9X to stabilize ALKBH3, thereby promoting the repair of alkylated DNA lesions. Acts as a chromatin regulator via its association with the Polycomb group (PcG) multiprotein PRC1-like complex; may act by deubiquitinating components of the PRC1-like complex. Able to mediate deubiquitination of histone H2B; it is however unsure whether this activity takes place in vivo. Exhibits a preference towards 'Lys-48'-linked ubiquitin chains. Increases regulatory T-cells (Treg) suppressive capacity by deubiquitinating and stabilizing the transcription factor FOXP3 which is crucial for Treg cell function. Plays a role in the maintenance of the circadian clock periodicity via deubiquitination and stabilization of the CRY1 and CRY2 proteins. Deubiquitinates REST, thereby stabilizing REST and promoting the maintenance of neural progenitor cells. Deubiquitinates SIRT7, inhibiting SIRT7 histone deacetylase activity and regulating gluconeogenesis. Involved in the regulation of WASH-dependent actin polymerization at the surface of endosomes and the regulation of endosomal protein recycling. It maintains optimal WASH complex activity and precise F-actin levels via deubiquitination of TRIM27 and WASHC1. Mediates the deubiquitination of phosphorylated DEPTOR, promoting its stability and leading to decreased mTORC1 signaling. This chain is Ubiquitin carboxyl-terminal hydrolase 7 (Usp7), found in Mus musculus (Mouse).